The following is a 472-amino-acid chain: Mixed lineage kinase domain-like protein (472 aa).

The interval 1 to 143 (MDKLGQIIKL…QEDRQDAEED (143 aa)) is N-terminal bundle and brace (NBB); mediates INSP6 binding. Positions 61–81 (LGRFDEVLKEANQQIEKFSKK) form a coiled coil. The residue at position 124 (serine 124) is a Phosphoserine. The stretch at 138-229 (QDAEEDGNEN…VFNNPQAESV (92 aa)) forms a coiled coil. The Protein kinase domain occupies 192–456 (GPPWTKLKTS…DGRSLSGRER (265 aa)). ATP contacts are provided by residues 198–206 (LKTSKMSTI) and lysine 219. A phosphoserine; by RIPK3 mark is found at serine 345 and serine 347. Position 349 is a phosphothreonine; by RIPK3 (threonine 349). Serine 352 is modified (phosphoserine; by RIPK3).

This sequence belongs to the protein kinase superfamily. In terms of assembly, homooligomer. Homotrimer; forms homotrimers on necroptosis induction. Upon TNF-induced necrosis, forms in complex with PGAM5, RIPK1 and RIPK3. Within this complex, may play a role in the proper targeting of RIPK1-RIPK3 to its downstream effector PGAM5. Interacts with RIPK3; the interaction is direct and promotes its phosphorylation and subsequent activation. Post-translationally, phosphorylation by RIPK3 induces a conformational switch that is required for necroptosis. It also induces homotrimerization and localization to the plasma membrane. In terms of tissue distribution, highly expressed in thymus, colon, intestine, liver, spleen and lung. Expressed at much lower level in skeletal muscle, heart and kidney. Not detected in brain.

It is found in the cytoplasm. The protein resides in the cell membrane. It localises to the nucleus. Activated via binding to highly phosphorylated inositol phosphates such as inositolhexakisphosphate (InsP6) which mediates the release of an N-terminal auto-inhibitory region. Activation requires not only RIPK3-dependent phosphorylation but also binding to highly phosphorylated inositol phosphates. Functionally, pseudokinase that plays a key role in TNF-induced necroptosis, a programmed cell death process. Does not have protein kinase activity. Activated following phosphorylation by RIPK3, leading to homotrimerization, localization to the plasma membrane and execution of programmed necrosis characterized by calcium influx and plasma membrane damage. In addition to TNF-induced necroptosis, necroptosis can also take place in the nucleus in response to orthomyxoviruses infection: following ZBP1 activation, which senses double-stranded Z-RNA structures, nuclear RIPK3 catalyzes phosphorylation and activation of MLKL, promoting disruption of the nuclear envelope and leakage of cellular DNA into the cytosol. Binds to highly phosphorylated inositol phosphates such as inositolhexakisphosphate (InsP6) which is essential for its necroptotic function. The protein is Mixed lineage kinase domain-like protein of Mus musculus (Mouse).